Here is a 359-residue protein sequence, read N- to C-terminus: Guanine nucleotide-binding protein subunit alpha-11 (359 aa).

Residues Cys-9 and Cys-10 are each lipidated (S-palmitoyl cysteine). One can recognise a G-alpha domain in the interval 38–359; it reads RELKLLLLGT…QLNLKEYNLV (322 aa). The segment at 41-54 is G1 motif; sequence KLLLLGTGESGKST. GTP is bound by residues 46-53 and 180-183; these read GTGESGKS and LRVR. Ser-53 lines the Mg(2+) pocket. Positions 178 to 186 are G2 motif; it reads DVLRVRVPT. Residue Thr-186 coordinates Mg(2+). The interval 201 to 210 is G3 motif; it reads FRMVDVGGQR. Residues 270–277 form a G4 motif region; it reads ILFLNKKD. GTP contacts are provided by residues 274–277 and Ala-331; that span reads NKKD. Positions 329–334 are G5 motif; it reads TCATDT.

This sequence belongs to the G-alpha family. G(q) subfamily. G proteins are composed of 3 units; alpha, beta and gamma. The alpha chain contains the guanine nucleotide binding site. Interacts with RGS22. Interacts with NTSR1.

The protein localises to the cell membrane. The protein resides in the cytoplasm. It catalyses the reaction GTP + H2O = GDP + phosphate + H(+). Functionally, guanine nucleotide-binding proteins (G proteins) function as transducers downstream of G protein-coupled receptors (GPCRs) in numerous signaling cascades. The alpha chain contains the guanine nucleotide binding site and alternates between an active, GTP-bound state and an inactive, GDP-bound state. Signaling by an activated GPCR promotes GDP release and GTP binding. The alpha subunit has a low GTPase activity that converts bound GTP to GDP, thereby terminating the signal. Both GDP release and GTP hydrolysis are modulated by numerous regulatory proteins. Signaling is mediated via phospholipase C-beta-dependent inositol lipid hydrolysis for signal propagation: activates phospholipase C-beta: following GPCR activation, GNA11 activates PLC-beta (PLCB1, PLCB2, PLCB3 or PLCB4), leading to production of diacylglycerol (DAG) and inositol 1,4,5-trisphosphate (IP3). Transduces FFAR4 signaling in response to long-chain fatty acids (LCFAs). Together with GNAQ, required for heart development. In the respiratory epithelium, transmits OXGR1-dependent signals that lead to downstream intracellular Ca(2+) release and mucocilliary clearance of airborne pathogens. The sequence is that of Guanine nucleotide-binding protein subunit alpha-11 (Gna11) from Rattus norvegicus (Rat).